Here is a 93-residue protein sequence, read N- to C-terminus: MLKPLGDRVVLKVEEREQKVGGFVIAGAGQDATKTAKVIAVGEGIRTLNGELVAPSVKADDTVLVESHAGIEVKDGEEKYLVVNETNILAIVE.

This sequence belongs to the GroES chaperonin family. Heptamer of 7 subunits arranged in a ring. Interacts with the chaperonin GroEL.

The protein resides in the cytoplasm. Its function is as follows. Together with the chaperonin GroEL, plays an essential role in assisting protein folding. The GroEL-GroES system forms a nano-cage that allows encapsulation of the non-native substrate proteins and provides a physical environment optimized to promote and accelerate protein folding. GroES binds to the apical surface of the GroEL ring, thereby capping the opening of the GroEL channel. The protein is Co-chaperonin GroES of Streptococcus constellatus.